Here is a 454-residue protein sequence, read N- to C-terminus: Bifunctional protein GlmU (454 aa).

The pyrophosphorylase stretch occupies residues 1 to 226 (MSLNVVILAA…PIETEGANNR (226 aa)). UDP-N-acetyl-alpha-D-glucosamine is bound by residues 8-11 (LAAG), Lys-22, Gln-73, 78-79 (GT), 100-102 (YGD), Gly-137, Glu-151, Asn-166, and Asn-224. Residue Asp-102 coordinates Mg(2+). Asn-224 provides a ligand contact to Mg(2+). The linker stretch occupies residues 227-247 (VQLAALERAYQARRAEELMLA). Residues 248-454 (GANLRDPARI…GWQRPVKKPK (207 aa)) are N-acetyltransferase. UDP-N-acetyl-alpha-D-glucosamine is bound by residues Arg-330 and Lys-348. His-360 functions as the Proton acceptor in the catalytic mechanism. Positions 363 and 374 each coordinate UDP-N-acetyl-alpha-D-glucosamine. Residues Ala-377, 383 to 384 (NY), Ser-402, Ala-420, and Arg-437 each bind acetyl-CoA.

The protein in the N-terminal section; belongs to the N-acetylglucosamine-1-phosphate uridyltransferase family. This sequence in the C-terminal section; belongs to the transferase hexapeptide repeat family. As to quaternary structure, homotrimer. Mg(2+) serves as cofactor.

The protein localises to the cytoplasm. It carries out the reaction alpha-D-glucosamine 1-phosphate + acetyl-CoA = N-acetyl-alpha-D-glucosamine 1-phosphate + CoA + H(+). It catalyses the reaction N-acetyl-alpha-D-glucosamine 1-phosphate + UTP + H(+) = UDP-N-acetyl-alpha-D-glucosamine + diphosphate. The protein operates within nucleotide-sugar biosynthesis; UDP-N-acetyl-alpha-D-glucosamine biosynthesis; N-acetyl-alpha-D-glucosamine 1-phosphate from alpha-D-glucosamine 6-phosphate (route II): step 2/2. It participates in nucleotide-sugar biosynthesis; UDP-N-acetyl-alpha-D-glucosamine biosynthesis; UDP-N-acetyl-alpha-D-glucosamine from N-acetyl-alpha-D-glucosamine 1-phosphate: step 1/1. Its pathway is bacterial outer membrane biogenesis; LPS lipid A biosynthesis. Catalyzes the last two sequential reactions in the de novo biosynthetic pathway for UDP-N-acetylglucosamine (UDP-GlcNAc). The C-terminal domain catalyzes the transfer of acetyl group from acetyl coenzyme A to glucosamine-1-phosphate (GlcN-1-P) to produce N-acetylglucosamine-1-phosphate (GlcNAc-1-P), which is converted into UDP-GlcNAc by the transfer of uridine 5-monophosphate (from uridine 5-triphosphate), a reaction catalyzed by the N-terminal domain. This Shewanella amazonensis (strain ATCC BAA-1098 / SB2B) protein is Bifunctional protein GlmU.